The sequence spans 652 residues: MVSRTDRSSSSTSKAVTSSPSTSSLSSAASSPSVSSSSSSSSVSAAGMTAVSTGPLTGSRKTWLVGADPDLRVPMREIVLTTGDTVVVYDTSGPYTDPGVTIDVRRGLPATRDSWIAQRGDTAPDERRTVPGTGASGPGTLGSGTPGSGTPGSGPLGLGGTDLDGRVRVPRRAVPGRPSITQLGYARRGQITREMEFVALREGLPVETVRAEIAAGRAVLPANVNHPESEPMAIGRAFLVKINANLGNSAVTSSIEEEVEKMVWATRWGADTVMDLSTGSDIALTREWIIRNAPVPVGTVPIYQALEKVGGRPEKLSWEVYRDTVIEQCEQGVDYMTVHAGVLLRYVPLTARRRTGIVSRGGSILASWCLAHHEENFLYTHFAELCEIFAAYDVTFSLGDGLRPGSIADANDEAQLAELATLGELTQVAWEHDVQVMIEGPGHVPMNKIEENVQLQRELCHDAPFYTLGPLTTDIAPGYDHITSAIGAAMIGWAGTAMLCYVTPKEHLGLPDRDDVKAGVIAYKIAAHAADLAKGHPGAQAWDDALSDARFEFRWADQFHLALDPDTARAFHDETLPAPAAKSAHFCSMCGPHFCSMKISHQVRAHAGGDGLDPAGHGADPAGDEAVTAGLREKAAEFNAAGNRIYLPVANS.

2 disordered regions span residues 1–45 and 118–166; these read MVSR…SVSA and QRGD…LDGR. Over residues 8–45 the composition is skewed to low complexity; that stretch reads SSSSTSKAVTSSPSTSSLSSAASSPSVSSSSSSSSVSA. Over residues 134 to 162 the composition is skewed to gly residues; the sequence is GASGPGTLGSGTPGSGTPGSGPLGLGGTD. Substrate is bound by residues Asn245, Met274, Tyr303, His339, 359–361, 400–403, and Glu439; these read SRG and DGLR. Residue His443 coordinates Zn(2+). Tyr466 is a substrate binding site. His507 is a binding site for Zn(2+). The [4Fe-4S] cluster site is built by Cys587, Cys590, and Cys595.

The protein belongs to the ThiC family. [4Fe-4S] cluster serves as cofactor.

It carries out the reaction 5-amino-1-(5-phospho-beta-D-ribosyl)imidazole + S-adenosyl-L-methionine = 4-amino-2-methyl-5-(phosphooxymethyl)pyrimidine + CO + 5'-deoxyadenosine + formate + L-methionine + 3 H(+). The protein operates within cofactor biosynthesis; thiamine diphosphate biosynthesis. Its function is as follows. Catalyzes the synthesis of the hydroxymethylpyrimidine phosphate (HMP-P) moiety of thiamine from aminoimidazole ribotide (AIR) in a radical S-adenosyl-L-methionine (SAM)-dependent reaction. This chain is Phosphomethylpyrimidine synthase, found in Frankia casuarinae (strain DSM 45818 / CECT 9043 / HFP020203 / CcI3).